The sequence spans 782 residues: Probable methionine--tRNA ligase, cytoplasmic (782 aa).

The short motif at 231–241 is the 'HIGH' region element; it reads PYVNNVPHLGN. The 'KMSKS' region motif lies at 551–555; the sequence is KFSKS.

The protein belongs to the class-I aminoacyl-tRNA synthetase family.

It localises to the cytoplasm. The enzyme catalyses tRNA(Met) + L-methionine + ATP = L-methionyl-tRNA(Met) + AMP + diphosphate. In Schizosaccharomyces pombe (strain 972 / ATCC 24843) (Fission yeast), this protein is Probable methionine--tRNA ligase, cytoplasmic (rar1).